The primary structure comprises 132 residues: Ribosome-binding factor A (132 aa).

Belongs to the RbfA family. In terms of assembly, monomer. Binds 30S ribosomal subunits, but not 50S ribosomal subunits or 70S ribosomes.

Its subcellular location is the cytoplasm. Functionally, one of several proteins that assist in the late maturation steps of the functional core of the 30S ribosomal subunit. Associates with free 30S ribosomal subunits (but not with 30S subunits that are part of 70S ribosomes or polysomes). Required for efficient processing of 16S rRNA. May interact with the 5'-terminal helix region of 16S rRNA. The polypeptide is Ribosome-binding factor A (Caldicellulosiruptor bescii (strain ATCC BAA-1888 / DSM 6725 / KCTC 15123 / Z-1320) (Anaerocellum thermophilum)).